Consider the following 334-residue polypeptide: 3-keto-steroid reductase/17-beta-hydroxysteroid dehydrogenase 7 (334 aa).

Residues 1-229 (MRKVVLITGA…VTCPGVVMTN (229 aa)) lie on the Extracellular side of the membrane. 8–15 (TGASSGIG) provides a ligand contact to NAD(+). An N-linked (GlcNAc...) asparagine glycan is attached at asparagine 37. Residue serine 171 participates in substrate binding. N-linked (GlcNAc...) asparagine glycosylation is present at asparagine 178. Catalysis depends on tyrosine 193, which acts as the Proton acceptor. N-linked (GlcNAc...) asparagine glycosylation occurs at asparagine 229. The chain crosses the membrane as a helical span at residues 230-250 (LTYGILPPFVWTLLLPVIWLL). Residues 251–334 (RFFAHAFTVT…ITIQKSDHHS (84 aa)) are Cytoplasmic-facing.

This sequence belongs to the short-chain dehydrogenases/reductases (SDR) family. ERG27 subfamily. In terms of assembly, binds to the short form of prolactin receptor. Phosphorylated. Most abundant in ovaries of pregnant animals.

It is found in the endoplasmic reticulum membrane. It carries out the reaction 17beta-estradiol + NADP(+) = estrone + NADPH + H(+). The enzyme catalyses a 3beta-hydroxysteroid + NADP(+) = a 3-oxosteroid + NADPH + H(+). The catalysed reaction is 4alpha-methyl-5alpha-cholest-7-en-3beta-ol + NADP(+) = 4alpha-methyl-5alpha-cholest-7-en-3-one + NADPH + H(+). It catalyses the reaction 4alpha-methyl-5alpha-cholest-8-en-3-one + NADPH + H(+) = 4alpha-methyl-5alpha-cholest-8-en-3beta-ol + NADP(+). It carries out the reaction 3-dehydro-4alpha-methylzymosterol + NADPH + H(+) = 4alpha-methylzymosterol + NADP(+). The enzyme catalyses zymosterone + NADPH + H(+) = zymosterol + NADP(+). The catalysed reaction is 5alpha-cholest-8-en-3-one + NADPH + H(+) = 5alpha-cholest-8-en-3beta-ol + NADP(+). It catalyses the reaction 5alpha-androstane-3beta,17beta-diol + NADP(+) = 17beta-hydroxy-5alpha-androstan-3-one + NADPH + H(+). It carries out the reaction 5alpha-androstane-3alpha,17beta-diol + NADP(+) = 17beta-hydroxy-5alpha-androstan-3-one + NADPH + H(+). It functions in the pathway steroid biosynthesis; estrogen biosynthesis. The protein operates within steroid biosynthesis; zymosterol biosynthesis; zymosterol from lanosterol: step 5/6. Functionally, bifunctional enzyme involved in steroid-hormone metabolism and cholesterol biosynthesis. Catalyzes the NADP(H)-dependent reduction of estrogens and androgens and regulates the biological potency of these steroids. Converts estrone (E1) to a more potent estrogen, 17beta-estradiol (E2). Converts dihydrotestosterone (DHT) to an inactive form. Also participates in the post-squalene cholesterol biosynthesis, as a 3-ketosteroid reductase. This chain is 3-keto-steroid reductase/17-beta-hydroxysteroid dehydrogenase 7 (Hsd17b7), found in Rattus norvegicus (Rat).